Consider the following 312-residue polypeptide: Elongation factor Ts (312 aa).

The interval 80–83 (TDFV) is involved in Mg(2+) ion dislocation from EF-Tu.

The protein belongs to the EF-Ts family.

The protein resides in the cytoplasm. Its function is as follows. Associates with the EF-Tu.GDP complex and induces the exchange of GDP to GTP. It remains bound to the aminoacyl-tRNA.EF-Tu.GTP complex up to the GTP hydrolysis stage on the ribosome. This is Elongation factor Ts from Paramagnetospirillum magneticum (strain ATCC 700264 / AMB-1) (Magnetospirillum magneticum).